The primary structure comprises 268 residues: 4-hydroxy-tetrahydrodipicolinate reductase (268 aa).

Residues 8-13 (GAAGRM) and E34 each bind NAD(+). R35 serves as a coordination point for NADP(+). NAD(+) is bound by residues 96-98 (GST) and 120-123 (SPNM). Catalysis depends on H153, which acts as the Proton donor/acceptor. H154 contributes to the (S)-2,3,4,5-tetrahydrodipicolinate binding site. K157 (proton donor) is an active-site residue. (S)-2,3,4,5-tetrahydrodipicolinate is bound at residue 163–164 (GT).

The protein belongs to the DapB family.

The protein localises to the cytoplasm. It carries out the reaction (S)-2,3,4,5-tetrahydrodipicolinate + NAD(+) + H2O = (2S,4S)-4-hydroxy-2,3,4,5-tetrahydrodipicolinate + NADH + H(+). The enzyme catalyses (S)-2,3,4,5-tetrahydrodipicolinate + NADP(+) + H2O = (2S,4S)-4-hydroxy-2,3,4,5-tetrahydrodipicolinate + NADPH + H(+). It participates in amino-acid biosynthesis; L-lysine biosynthesis via DAP pathway; (S)-tetrahydrodipicolinate from L-aspartate: step 4/4. Its function is as follows. Catalyzes the conversion of 4-hydroxy-tetrahydrodipicolinate (HTPA) to tetrahydrodipicolinate. In Anaeromyxobacter sp. (strain Fw109-5), this protein is 4-hydroxy-tetrahydrodipicolinate reductase.